A 28-amino-acid chain; its full sequence is Probable small spore coat assembly protein B (28 aa).

A helical membrane pass occupies residues Val-4 to Ala-24.

Belongs to the SscA family.

It is found in the membrane. This is Probable small spore coat assembly protein B from Bacillus subtilis (strain 168).